A 204-amino-acid chain; its full sequence is 3-isopropylmalate dehydratase small subunit (204 aa).

It belongs to the LeuD family. LeuD type 1 subfamily. In terms of assembly, heterodimer of LeuC and LeuD.

The catalysed reaction is (2R,3S)-3-isopropylmalate = (2S)-2-isopropylmalate. Its pathway is amino-acid biosynthesis; L-leucine biosynthesis; L-leucine from 3-methyl-2-oxobutanoate: step 2/4. Catalyzes the isomerization between 2-isopropylmalate and 3-isopropylmalate, via the formation of 2-isopropylmaleate. The protein is 3-isopropylmalate dehydratase small subunit of Psychromonas ingrahamii (strain DSM 17664 / CCUG 51855 / 37).